Reading from the N-terminus, the 180-residue chain is Large ribosomal subunit protein uL5 (180 aa).

The protein belongs to the universal ribosomal protein uL5 family. Part of the 50S ribosomal subunit; part of the 5S rRNA/L5/L18/L25 subcomplex. Contacts the 5S rRNA and the P site tRNA. Forms a bridge to the 30S subunit in the 70S ribosome.

Its function is as follows. This is one of the proteins that bind and probably mediate the attachment of the 5S RNA into the large ribosomal subunit, where it forms part of the central protuberance. In the 70S ribosome it contacts protein S13 of the 30S subunit (bridge B1b), connecting the 2 subunits; this bridge is implicated in subunit movement. Contacts the P site tRNA; the 5S rRNA and some of its associated proteins might help stabilize positioning of ribosome-bound tRNAs. The protein is Large ribosomal subunit protein uL5 of Latilactobacillus sakei subsp. sakei (strain 23K) (Lactobacillus sakei subsp. sakei).